The primary structure comprises 121 residues: UPF0045 protein sll0230 (121 aa).

The protein belongs to the UPF0045 family.

The polypeptide is UPF0045 protein sll0230 (Synechocystis sp. (strain ATCC 27184 / PCC 6803 / Kazusa)).